Reading from the N-terminus, the 309-residue chain is MAIELNVGRKVTVTVPGSSANLGPGFDTLGLALSVYDTVEVEIIPSGLEVEVFGEGQGEVPLDGSHLVVKAIRAGLKAADAEVPGLRVVCHNNIPQSRGLGSSAAAAVAGVAAANGLADFPLTQEQIVQLSSAFEGHPDNAAASVLGGAVVSWTNLSIDGKSQPQYAAVPLEVQDNIRATALVPNFHASTEAVRRVLPTEVTHIDARFNVSRVAVMIVALQQRPDLLWEGTRDRLHQPYRAEVLPVTSEWVNRLRNRGYAAYLSGAGPTAMVLSTEPIPDKVLEDARESGIKVLELEVAGPVKVEVNQP.

95-105 (PQSRGLGSSAA) contributes to the ATP binding site.

The protein belongs to the GHMP kinase family. Homoserine kinase subfamily.

The protein localises to the cytoplasm. It catalyses the reaction L-homoserine + ATP = O-phospho-L-homoserine + ADP + H(+). It functions in the pathway amino-acid biosynthesis; L-threonine biosynthesis; L-threonine from L-aspartate: step 4/5. In terms of biological role, catalyzes the ATP-dependent phosphorylation of L-homoserine to L-homoserine phosphate. This chain is Homoserine kinase, found in Corynebacterium glutamicum (strain R).